The chain runs to 460 residues: uncharacterized protein (460 aa).

Positions 1–33 (MKESNSRREFLSQSGKMVTAAALFGTSVPLAHA) form a signal peptide, tat-type signal.

Belongs to the metallo-dependent hydrolases superfamily. Exported by the Tat system. The position of the signal peptide cleavage has not been experimentally proven. Can also be exported by the Sec system.

This is an uncharacterized protein from Escherichia coli (strain K12).